Here is a 292-residue protein sequence, read N- to C-terminus: MGTLSLSSSLKPSLVSSRLNSSSSASSSSFPKPNNLYLKPTKLISPPLRTTSPSPLRFANASIEMSQTQESAIRGAESDVMGLLLRERIVFLGSSIDDFVADAIMSQLLLLDAKDPKKDIKLFINSPGGSLSATMAIYDVVQLVRADVSTIALGIAASTASIILGAGTKGKRFAMPNTRIMIHQPLGGASGQAIDVEIQAKEVMHNKNNVTSIIAGCTSRSFEQVLKDIDRDRYMSPIEAVEYGLIDGVIDGDSIIPLEPVPDRVKPRVNYEEISKDPMKFLTPEIPDDEIY.

The transit peptide at 1 to 65 (MGTLSLSSSL…LRFANASIEM (65 aa)) directs the protein to the chloroplast. Ser66 bears the N-acetylserine mark. Ser158 (nucleophile) is an active-site residue. His183 is an active-site residue.

This sequence belongs to the peptidase S14 family. Component of the chloroplastic Clp protease core complex which consist of at least 16 proteins: CLPP4 (3 copies), CLPP5 (3 copies), CLPR4 (2 copies), ClpP1 (1 copy), CLPP6 (1 copy), CLPR2 (1 copy), CLPT1 (1 copy), CLPT2 (1 copy) and 3 copies of CLPP3 and/or CLPR1 and/or CLPR3. Interacts with CHIP. The core complex is organized in two heptameric rings, one containing CLPP3,4,5,6 in a 1:2:3:1 ratio and the other CLPP1 and CLPR1,2,3,4 in a 3:1:1:1:1 ratio. Ubiquitinated by CHIP. Mostly expressed in leaves. Also detected in stems, and to a lower extent, in roots (at protein level).

It localises to the plastid. It is found in the chloroplast stroma. The enzyme catalyses Hydrolysis of proteins to small peptides in the presence of ATP and magnesium. alpha-casein is the usual test substrate. In the absence of ATP, only oligopeptides shorter than five residues are hydrolyzed (such as succinyl-Leu-Tyr-|-NHMec, and Leu-Tyr-Leu-|-Tyr-Trp, in which cleavage of the -Tyr-|-Leu- and -Tyr-|-Trp bonds also occurs).. Cleaves peptides in various proteins in a process that requires ATP hydrolysis. Has a chymotrypsin-like activity. Plays a major role in the degradation of misfolded proteins. Essential protein required for chloroplast development and integrity. Essential for Embryogenesis. This chain is ATP-dependent Clp protease proteolytic subunit 4, chloroplastic, found in Arabidopsis thaliana (Mouse-ear cress).